Reading from the N-terminus, the 254-residue chain is YWVGPFYVGFFGVTAAFFIMLGTALIIWGAALGPTWNIWQISIAPPDLSYGLGLAPLAKGGLWQIITVCAIGAFGSWALREVEISRKLGIGLHVPAAFSVAIFAYVTLEVIRPLLMGAWGNGFPYGIMSHLDWVSNTGYAYLNFEYNPMHMVAVTLFFTTTLALALHGSLVLAAINPPAGETVKFAEHEDTFFRDFIGYSIGTLGIHRLGLFLALGAGFASATCILLSGPFWTQGWPSWWGWWLHLPIWQFGGH.

3 helical membrane-spanning segments follow: residues 10–32 (FFGVTAAFFIMLGTALIIWGAAL), 60–88 (GGLWQIITVCAIGAFGSWALREVEISRKL), and 93–115 (HVPAAFSVAIFAYVTLEVIRPLL). Positions 130 and 150 each coordinate (7R,8Z)-bacteriochlorophyll b. The helical transmembrane segment at 148–175 (PMHMVAVTLFFTTTLALALHGSLVLAAI) threads the bilayer. H167 provides a ligand contact to Fe cation. A ubiquinone is bound at residue F193. Residues 202–227 (GTLGIHRLGLFLALGAGFASATCILL) form a helical membrane-spanning segment. A Fe cation-binding site is contributed by H207.

It belongs to the reaction center PufL/M/PsbA/D family. In terms of assembly, reaction center is composed of four bacteriochlorophylls, two bacteriopheophytins, two ubiquinones, one iron, and two highly hydrophobic polypeptide chains (designated L and M).

Its subcellular location is the cell inner membrane. In terms of biological role, the reaction center is a membrane-bound complex that mediates the initial photochemical event in the electron transfer process of photosynthesis. The sequence is that of Reaction center protein L chain (pufL) from Acidiphilium organovorum.